The following is a 677-amino-acid chain: Envelope glycoprotein (677 aa).

An N-terminal signal peptide occupies residues 1-33 (MGSGYQLLQLPRERFRKTSFLVWVIILFQRAIS). Topologically, residues 34–651 (MPLGIVTNST…DLNLWTGWRQ (618 aa)) are extracellular. N-linked (GlcNAc...) asparagine; by host glycosylation is present at N41. 5 cysteine pairs are disulfide-bonded: C54-C610, C109-C136, C122-C148, C512-C557, and C602-C609. The receptor-binding stretch occupies residues 55 to 202 (RDKLSSTSQL…HFWKATPAHE (148 aa)). N205, N229, N239, N258, N269, N297, N317, N318, N339, N406, N420, N435, and N463 each carry an N-linked (GlcNAc...) asparagine; by host glycan. The segment at 306–486 (NLHFQILSTH…PSQPGLTINT (181 aa)) is mucin-like region. Positions 315–326 (HTNNSSDQSPAG) are enriched in polar residues. 2 disordered regions span residues 315–349 (HTNN…TDSP) and 361–484 (EEMS…GLTI). 2 stretches are compositionally biased toward polar residues: residues 363-423 (MSTQ…NETI) and 432-472 (QGSN…TSPG). Residues 525-540 (GAAVGLAWIPYFGPAA) are fusion peptide. Positions 555–596 (LICGLRQLANETTQALQLFLRATTELRTYSLLNRKAIDFLLQ) form a coiled coil. The N-linked (GlcNAc...) asparagine; by host glycan is linked to N564. The stretch at 616-635 (WTKNITDEINQIKHDFIDNP) forms a coiled coil. N619 carries N-linked (GlcNAc...) asparagine; by host glycosylation. Residues 652–672 (WIPAGIGIIGVIIAIIALLCI) form a helical membrane-spanning segment. 2 S-palmitoyl cysteine; by host lipidation sites follow: C671 and C673. The Cytoplasmic segment spans residues 673–677 (CKILC).

The protein belongs to the filoviruses glycoprotein family. As to quaternary structure, homotrimer; each monomer consists of a GP1 and a GP2 subunit linked by disulfide bonds. The resulting peplomers (GP1,2) protrude from the virus surface as spikes. Interacts with host integrin alpha-V/ITGAV. Interacts with host CLEC10A. Binds also to host CD209 and CLEC4M/DC-SIGN(R). Interacts with host FOLR1. Interacts with BST2; this interaction inhibits the antiviral effect of BST2 and this allows viral release from infected cells. Interacts with host FCN1; this interaction enhances viral entry. Interacts with host TLR4; this interaction induces cell death in T-lymphocytes or proinflammatory cytokines and SOCS1 production in monocytes. Interacts with host entry receptor NPC1. In terms of assembly, GP1 and GP2delta are part of GP1,2delta soluble complexes released by ectodomain shedding. In terms of processing, the signal peptide region modulates GP's high mannose glycosylation, thereby determining the efficiency of the interactions with DC-SIGN(R). N-glycosylated. Post-translationally, O-glycosylated in the mucin-like region. In terms of processing, palmitoylation of GP2 is not required for its function. Specific enzymatic cleavages in vivo yield mature proteins. The precursor is processed into GP1 and GP2 by host cell furin in the trans Golgi, and maybe by other host proteases, to yield the mature GP1 and GP2 proteins. The cleavage site corresponds to the furin optimal cleavage sequence [KR]-X-[KR]-R. This cleavage does not seem to be required for function. After the internalization of the virus into cell endosomes, GP1 C-terminus is removed by the endosomal proteases cathepsin B, cathepsin L, or both, leaving a 19-kDa N-terminal fragment which is further digested by cathepsin B. Proteolytic processing of GP1,2 by host ADAM17 can remove the transmembrane anchor of GP2 and leads to shedding of complexes consisting in GP1 and truncated GP2 (GP1,2delta).

It is found in the virion membrane. Its subcellular location is the host cell membrane. It localises to the secreted. Functionally, trimeric GP1,2 complexes form the virion surface spikes and mediate the viral entry processes, with GP1 acting as the receptor-binding subunit and GP2 as the membrane fusion subunit. At later times of infection, down-regulates the expression of various host cell surface molecules that are essential for immune surveillance and cell adhesion. Down-modulates several integrins including ITGA1, ITGA2, ITGA3, ITGA4, ITGA5, ITGA6, ITGAV and ITGB1. This decrease in cell adhesion molecules may lead to cell detachment, contributing to the disruption of blood vessel integrity and hemorrhages developed during infection (cytotoxicity). Interacts with host TLR4 and thereby stimulates the differentiation and activation of monocytes leading to bystander death of T-lymphocytes. Down-regulates as well the function of host natural killer cells. Counteracts the antiviral effect of host BST2/tetherin that restricts release of progeny virions from infected cells. However, cooperates with VP40 and host BST2 to activate canonical NF-kappa-B pathway in a manner dependent on neddylation. Its function is as follows. Functions as a decoy for anti-GP1,2 antibodies thereby contributing to viral immune evasion. Interacts and activates host macrophages and dendritic cells inducing up-regulation of cytokine transcription. This effect is mediated throught activation of host TLR4. In terms of biological role, responsible for binding to the receptor(s) on target cells. Interacts with CD209/DC-SIGN and CLEC4M/DC-SIGNR which act as cofactors for virus entry into dendritic cells (DCs) and endothelial cells. Binding to the macrophage specific lectin CLEC10A also seems to enhance virus infectivity. Interaction with FOLR1/folate receptor alpha may be a cofactor for virus entry in some cell types, although results are contradictory. Members of the Tyro3 receptor tyrosine kinase family also seem to be cell entry factors in filovirus infection. Once attached, the virions are internalized through clathrin-dependent endocytosis and/or macropinocytosis. After internalization of the virus into the endosomes of the host cell, proteolysis of GP1 by two cysteine proteases, CTSB/cathepsin B and CTSL/cathepsin L removes the glycan cap and allows GP1 binding to the host entry receptor NPC1. NPC1-binding, Ca(2+) and acidic pH induce a conformational change of GP2, which unmasks its fusion peptide and permit membranes fusion. Acts as a class I viral fusion protein. Under the current model, the protein has at least 3 conformational states: pre-fusion native state, pre-hairpin intermediate state, and post-fusion hairpin state. During viral and target cell membrane fusion, the coiled coil regions (heptad repeats) assume a trimer-of-hairpins structure, positioning the fusion peptide in close proximity to the C-terminal region of the ectodomain. The formation of this structure appears to drive apposition and subsequent fusion of viral and target cell membranes. Responsible for penetration of the virus into the cell cytoplasm by mediating the fusion of the membrane of the endocytosed virus particle with the endosomal membrane. Low pH in endosomes induces an irreversible conformational change in GP2, releasing the fusion hydrophobic peptide. This chain is Envelope glycoprotein (GP), found in Reston ebolavirus (strain Reston-89) (REBOV).